The primary structure comprises 93 residues: Kunitz-type serine protease inhibitor 3 (93 aa).

Positions 1–24 (MSSGGLLLLLGLLTLWAELTPVST) are cleaved as a signal peptide. In terms of domain architecture, BPTI/Kunitz inhibitor spans 31-81 (CYLPADPGRCLAYMPSFYYDSASNKCKKFIYGGCRGNANNFKTWDECRHTC). Cystine bridges form between C31-C81, C40-C64, and C56-C77. The propeptide occupies 90–93 (IASN).

This sequence belongs to the venom Kunitz-type family. Expressed by the venom gland.

It is found in the secreted. In terms of biological role, serine protease inhibitor that principally inhibits alpha-chymotrypsin (Ki=4.3 nM). Shows weak inhibition on trypsin (Ki=5100 nM), and plasma kallikrein. The chain is Kunitz-type serine protease inhibitor 3 from Vipera ammodytes ammodytes (Western sand viper).